The sequence spans 318 residues: Tumor necrosis factor ligand superfamily member 11 (318 aa).

Residues 1 to 47 (MRRANRDYGKYLRGSEEMGSCPGVPHEGPLHPAPSAPAPAPPPAASR) are Cytoplasmic-facing. The interval 13–41 (RGSEEMGSCPGVPHEGPLHPAPSAPAPAP) is disordered. Residues 31 to 41 (HPAPSAPAPAP) are compositionally biased toward pro residues. A helical; Signal-anchor for type II membrane protein membrane pass occupies residues 48–68 (FMFLALLGLGLGQVVCSIALF). Residues 69–318 (LYFRAQMDPN…FGAFKVQDID (250 aa)) lie on the Extracellular side of the membrane. In terms of domain architecture, THD spans 165-314 (PFAHLTINAA…DATYFGAFKV (150 aa)). 2 N-linked (GlcNAc...) asparagine glycosylation sites follow: asparagine 199 and asparagine 264.

The protein belongs to the tumor necrosis factor family. Homotrimer. Interacts with TNFRSF11A and TNFRSF11B. Interacts with FBN1 (via N-terminal domain) in a Ca(+2)-dependent manner. Interacts with TNFAIP6 (via both Link and CUB domains). The soluble form derives from the membrane form by proteolytic processing. Highly expressed in thymus and bone tissues.

The protein resides in the cell membrane. It is found in the secreted. In terms of biological role, cytokine that binds to TNFRSF11B/OPG and to TNFRSF11A/RANK. Osteoclast differentiation and activation factor. Augments the ability of dendritic cells to stimulate naive T-cell proliferation. May be an important regulator of interactions between T-cells and dendritic cells and may play a role in the regulation of the T-cell-dependent immune response. May also play an important role in enhanced bone-resorption in humoral hypercalcemia of malignancy. Induces osteoclastogenesis by activating multiple signaling pathways in osteoclast precursor cells, chief among which is induction of long lasting oscillations in the intracellular concentration of Ca (2+) resulting in the activation of NFATC1, which translocates to the nucleus and induces osteoclast-specific gene transcription to allow differentiation of osteoclasts. During osteoclast differentiation, in a TMEM64 and ATP2A2-dependent manner induces activation of CREB1 and mitochondrial ROS generation necessary for proper osteoclast generation. The sequence is that of Tumor necrosis factor ligand superfamily member 11 (Tnfsf11) from Rattus norvegicus (Rat).